Here is an 827-residue protein sequence, read N- to C-terminus: MRQRLLFLTTLVPFVLAPRPPEEPGSGSHLRLEKLDSLLSDYDILSLSNIQQHSIRKRDLQSATHLETLLTFSALKRHFKLYLTSSTERFSQNLRVVVVDGKEESEYSVKWQDFFSGHVVGEPDSRVLAHIGDDDVTVRINTDGAEYNIEPLWRFVNDTKDKRMLVYKSEDIKDFSRLQSPKVCGYLNADSEELLPKGLIDREPSEEFVRRVKRRAEPNPLKNTCKLLVVADHRFYKYMGRGEESTTTNYLIELIDRVDDIYRNTSWDNAGFKGYGVQIEQIRILKSPQEVKPGERHFNMAKSFPNEEKDAWDVKMLLEQFSLDIAEEASKVCLAHLFTYQDFDMGTLGLAYVGSPRANSHGGVCPKAYYNPGVKKNIYLNSGLTSTKNYGKTILTKEADLVTTHELGHNFGAEHDPDGLAECAPNEDQGGKYVMYPIAVSGDHENNKMFSNCSKQSIYKTIESKAQECFQERSNKVCGNSRVDEGEECDPGIMYLNNDTCCNSDCTLKPGVQCSDRNSPCCKNCQFETAQKKCQEAINATCKGVSYCTGNSSECPPPGDAEDDTVCLDLGKCKAGKCIPFCKREQELESCACADTDNSCKVCCRNLSGPCVPYVDAEQKNLFLRKGKPCTVGFCDMNGKCEKRVQDVIERFWDFIDQLSINTFGKFLADNIVGSVLVFSLIFWIPFSILVHCVDKKLDKQYESLSLFHHSNIEMLSSMDSASVRIIKPFPAPQTPGRLQALQPAAMMPPVSAAPKLDHQRMDTIQEDPSTDSHVDDDGFEKDPFPNSSAAAKSFEDLTDHPVTRSEKAASFKLQRQSRVDSKETEC.

Positions 1–17 are cleaved as a signal peptide; sequence MRQRLLFLTTLVPFVLA. Residues 18 to 214 constitute a propeptide that is removed on maturation; it reads PRPPEEPGSG…SEEFVRRVKR (197 aa). Asn157 carries N-linked (GlcNAc...) asparagine glycosylation. A Cysteine switch motif is present at residues 182–189; it reads KVCGYLNA. Cys184 provides a ligand contact to Zn(2+). At 215 to 671 the chain is on the extracellular side; the sequence is RAEPNPLKNT…NTFGKFLADN (457 aa). A Peptidase M12B domain is found at 223-474; the sequence is NTCKLLVVAD…KAQECFQERS (252 aa). 3 cysteine pairs are disulfide-bonded: Cys225–Cys333, Cys365–Cys469, and Cys423–Cys453. N-linked (GlcNAc...) asparagine glycosylation is present at Asn264. His405 serves as a coordination point for Zn(2+). Glu406 is an active-site residue. Positions 409 and 415 each coordinate Zn(2+). Residues Asn452, Asn498, Asn539, and Asn551 are each glycosylated (N-linked (GlcNAc...) asparagine). Residues 475-563 form the Disintegrin domain; sequence NKVCGNSRVD…ECPPPGDAED (89 aa). 4 disulfides stabilise this stretch: Cys534–Cys555, Cys573–Cys582, Cys578–Cys591, and Cys593–Cys600. Positions 603–671 are crambin-like; sequence CCRNLSGPCV…NTFGKFLADN (69 aa). The N-linked (GlcNAc...) asparagine glycan is linked to Asn606. A helical transmembrane segment spans residues 672 to 692; sequence IVGSVLVFSLIFWIPFSILVH. Residues 693-827 lie on the Cytoplasmic side of the membrane; sequence CVDKKLDKQY…SRVDSKETEC (135 aa). An SH3-binding motif is present at residues 731-738; that stretch reads PAPQTPGR. Residue Thr735 is modified to Phosphothreonine; by MAPK14. Thr764 carries the post-translational modification Phosphothreonine. Residues 766–827 form a disordered region; sequence QEDPSTDSHV…SRVDSKETEC (62 aa). Ser770 carries the post-translational modification Phosphoserine. Basic and acidic residues-rich tracts occupy residues 771-784, 794-810, and 818-827; these read TDSHVDDDGFEKDP, SFEDLTDHPVTRSEKAA, and SRVDSKETEC. 2 positions are modified to phosphoserine: Ser794 and Ser822.

Interacts with MAD2L1, MAPK14 and MUC1. Interacts with iRhom1/RHBDF1 and iRhom2/RHBDF2. Interacts with FRMD8 via its interaction with iRhom1/RHBDF1 and iRhom2/RHBDF2. Interacts with TSPAN8. Requires Zn(2+) as cofactor. The precursor is cleaved by a furin endopeptidase. Post-translationally, phosphorylated. Stimulation by growth factor or phorbol 12-myristate 13-acetate induces phosphorylation of Ser-822 but decreases phosphorylation of Ser-794. Phosphorylation at Thr-735 by MAPK14 is required for ADAM17-mediated ectodomain shedding.

Its subcellular location is the membrane. The enzyme catalyses Narrow endopeptidase specificity. Cleaves Pro-Leu-Ala-Gln-Ala-|-Val-Arg-Ser-Ser-Ser in the membrane-bound, 26-kDa form of tumor necrosis factor alpha (TNFalpha). Similarly cleaves other membrane-anchored, cell-surface proteins to 'shed' the extracellular domains.. Its function is as follows. Transmembrane metalloprotease which mediates the ectodomain shedding of a myriad of transmembrane proteins including adhesion proteins, growth factor precursors and cytokines important for inflammation and immunity. Cleaves the membrane-bound precursor of TNF-alpha to its mature soluble form. Responsible for the proteolytical release of soluble JAM3 from endothelial cells surface. Responsible for the proteolytic release of several other cell-surface proteins, including p75 TNF-receptor, interleukin 1 receptor type II, p55 TNF-receptor, transforming growth factor-alpha, L-selectin, growth hormone receptor, MUC1 and the amyloid precursor protein. Acts as an activator of Notch pathway by mediating cleavage of Notch, generating the membrane-associated intermediate fragment called Notch extracellular truncation (NEXT). Plays a role in the proteolytic processing of ACE2. Plays a role in hemostasis through shedding of GP1BA, the platelet glycoprotein Ib alpha chain. Mediates the proteolytic cleavage of LAG3, leading to release the secreted form of LAG3. Mediates the proteolytic cleavage of IL6R, leading to the release of secreted form of IL6R. Mediates the proteolytic cleavage and shedding of FCGR3A upon NK cell stimulation, a mechanism that allows for increased NK cell motility and detachment from opsonized target cells. Cleaves TREM2, resulting in shedding of the TREM2 ectodomain. This chain is Disintegrin and metalloproteinase domain-containing protein 17 (Adam17), found in Rattus norvegicus (Rat).